The chain runs to 220 residues: Octanoyltransferase (220 aa).

In terms of domain architecture, BPL/LPL catalytic spans 27 to 208 (PGTADEIWLC…QLARAHGQAV (182 aa)). Residues 66 to 73 (RGGQVTYH), 139 to 141 (ALG), and 152 to 154 (GLA) contribute to the substrate site. The active-site Acyl-thioester intermediate is cysteine 170.

Belongs to the LipB family.

The protein resides in the cytoplasm. It carries out the reaction octanoyl-[ACP] + L-lysyl-[protein] = N(6)-octanoyl-L-lysyl-[protein] + holo-[ACP] + H(+). It participates in protein modification; protein lipoylation via endogenous pathway; protein N(6)-(lipoyl)lysine from octanoyl-[acyl-carrier-protein]: step 1/2. In terms of biological role, catalyzes the transfer of endogenously produced octanoic acid from octanoyl-acyl-carrier-protein onto the lipoyl domains of lipoate-dependent enzymes. Lipoyl-ACP can also act as a substrate although octanoyl-ACP is likely to be the physiological substrate. The polypeptide is Octanoyltransferase (Bordetella pertussis (strain Tohama I / ATCC BAA-589 / NCTC 13251)).